The sequence spans 175 residues: VQ motif-containing protein 25 (175 aa).

Positions 50 to 59 (FRELVQSLTG) match the VQ motif.

Its subcellular location is the nucleus. In terms of biological role, may function as negative regulator of plant defense. The polypeptide is VQ motif-containing protein 25 (Arabidopsis thaliana (Mouse-ear cress)).